The chain runs to 434 residues: MTFEEKRVGHNIINQLPDSLLCEIFFNLPTEEVVKTSLICRRWRYVWQSLPGLDLVINGSKNYDKFDFLERFMFLQRVKLRYVGYGHNCRNMTSMMMNNVIKHKIQHLDVGSNRRYVYDRVEIPPTIYTSCERLVFLKLHRANLPKSPDSVSLPCLKIMDLQKINFVDSLDMEKLVSVCPALETLTMDKMYGAKVSSQSLLSFCLTNNETGYLKTQVVMQTPKLKYLKLNRQFIQRIVINDLSSIVMLNLDDVAYFGETLLSILKLISCVRDLTISFDILQDYRHFSKSKSLPKFHKLSVLSVKDMAVGSWESLLIFLESCQNLKSLVMGFRDYNWGINFSDVPQCVLSSLEFVEVKAREVADMKKLWSYFMENSTVLKKFTLCLDHIEDQRDHVMLSKLFTFPRRSNKCEVVVRLRTFGTYKPMSMFSCADGF.

The F-box domain occupies 10–66; sequence HNIINQLPDSLLCEIFFNLPTEEVVKTSLICRRWRYVWQSLPGLDLVINGSKNYDKF. LRR repeat units lie at residues 72–99, 114–141, 164–189, 204–231, 252–277, and 306–331; these read FMFLQRVKLRYVGYGHNCRNMTSMMMNN, RRYVYDRVEIPPTIYTSCERLVFLKLHR, INFVDSLDMEKLVSVCPALETLTMDK, CLTNNETGYLKTQVVMQTPKLKYLKLNR, DVAYFGETLLSILKLISCVRDLTISF, and MAVGSWESLLIFLESCQNLKSLVMGF. One can recognise an FBD domain in the interval 336–385; it reads WGINFSDVPQCVLSSLEFVEVKAREVADMKKLWSYFMENSTVLKKFTLCL.

This chain is Putative F-box/FBD/LRR-repeat protein At1g16940, found in Arabidopsis thaliana (Mouse-ear cress).